The primary structure comprises 506 residues: RNA-splicing ligase RtcB homolog 1 (506 aa).

Mn(2+) contacts are provided by Asp120, Cys123, His228, His260, and His354. Asn227–Glu231 contributes to the GMP binding site. GMP contacts are provided by residues His354–Asn355, Gly403–Met406, Ser410, His429–Gly432, and Lys505. The GMP-histidine intermediate role is filled by His429.

Belongs to the RtcB family. Catalytic component of the tRNA-splicing ligase complex. The cofactor is Mn(2+).

It carries out the reaction a 3'-end 3'-phospho-ribonucleotide-RNA + a 5'-end dephospho-ribonucleoside-RNA + GTP = a ribonucleotidyl-ribonucleotide-RNA + GMP + diphosphate. It catalyses the reaction a 3'-end 2',3'-cyclophospho-ribonucleotide-RNA + a 5'-end dephospho-ribonucleoside-RNA + GTP + H2O = a ribonucleotidyl-ribonucleotide-RNA + GMP + diphosphate + H(+). Functionally, catalytic subunit of the tRNA-splicing ligase complex that acts by directly joining spliced tRNA halves to mature-sized tRNAs by incorporating the precursor-derived splice junction phosphate into the mature tRNA as a canonical 3',5'-phosphodiester. May act as an RNA ligase with broad substrate specificity, and may function toward other RNAs. The polypeptide is RNA-splicing ligase RtcB homolog 1 (Culex quinquefasciatus (Southern house mosquito)).